A 380-amino-acid chain; its full sequence is Lipid-A-disaccharide synthase (380 aa).

This sequence belongs to the LpxB family.

It carries out the reaction a lipid X + a UDP-2-N,3-O-bis[(3R)-3-hydroxyacyl]-alpha-D-glucosamine = a lipid A disaccharide + UDP + H(+). It functions in the pathway bacterial outer membrane biogenesis; LPS lipid A biosynthesis. Functionally, condensation of UDP-2,3-diacylglucosamine and 2,3-diacylglucosamine-1-phosphate to form lipid A disaccharide, a precursor of lipid A, a phosphorylated glycolipid that anchors the lipopolysaccharide to the outer membrane of the cell. This chain is Lipid-A-disaccharide synthase, found in Vibrio vulnificus (strain CMCP6).